A 340-amino-acid polypeptide reads, in one-letter code: Ferrochelatase (340 aa).

Fe cation-binding residues include His189 and Glu292.

The protein belongs to the ferrochelatase family.

The protein localises to the cytoplasm. It carries out the reaction heme b + 2 H(+) = protoporphyrin IX + Fe(2+). It functions in the pathway porphyrin-containing compound metabolism; protoheme biosynthesis; protoheme from protoporphyrin-IX: step 1/1. Its function is as follows. Catalyzes the ferrous insertion into protoporphyrin IX. This is Ferrochelatase from Ectopseudomonas mendocina (strain ymp) (Pseudomonas mendocina).